We begin with the raw amino-acid sequence, 138 residues long: Phosphoribosyl-AMP cyclohydrolase (138 aa).

D84 is a binding site for Mg(2+). C85 is a Zn(2+) binding site. Mg(2+) is bound by residues D86 and D88. The Zn(2+) site is built by C102 and C109.

This sequence belongs to the PRA-CH family. Homodimer. Mg(2+) is required as a cofactor. The cofactor is Zn(2+).

It is found in the cytoplasm. It catalyses the reaction 1-(5-phospho-beta-D-ribosyl)-5'-AMP + H2O = 1-(5-phospho-beta-D-ribosyl)-5-[(5-phospho-beta-D-ribosylamino)methylideneamino]imidazole-4-carboxamide. The protein operates within amino-acid biosynthesis; L-histidine biosynthesis; L-histidine from 5-phospho-alpha-D-ribose 1-diphosphate: step 3/9. In terms of biological role, catalyzes the hydrolysis of the adenine ring of phosphoribosyl-AMP. The polypeptide is Phosphoribosyl-AMP cyclohydrolase (Burkholderia ambifaria (strain ATCC BAA-244 / DSM 16087 / CCUG 44356 / LMG 19182 / AMMD) (Burkholderia cepacia (strain AMMD))).